Here is a 352-residue protein sequence, read N- to C-terminus: MNELELLGPRAYGDALGRAALKATAEDFQVDEVLDIPLSGDGEHLWLWVEKRGLNTVEAARRLARAAGVQLRTVSYAGLKDRQALTRQWFSIQLPGKADPDLSAAQDATLQILKSGRHKRKLQRGAHAANGFTLRLTQLEGDKEALNQRLETIALQGIPNYFGVQRFGYQGGNLGEARDYAGRKALPEQRAVRSRLLSTARSYLFNRVLAARVADGSWQKAQVGDLLAFTDSRSFFPADVDECSDPRLAILDLHPTGPQWGEGPSPAGGATAALENAIANDESVLRDWLVRAGMEHERRILRLPIGRLTWHYPEPDILQLEFVLPPGCFATVLVRELVDLVPVGQTDSPCVF.

Asp81 serves as the catalytic Nucleophile. The TRUD domain maps to Gly157–Leu303.

Belongs to the pseudouridine synthase TruD family.

The catalysed reaction is uridine(13) in tRNA = pseudouridine(13) in tRNA. Functionally, responsible for synthesis of pseudouridine from uracil-13 in transfer RNAs. The polypeptide is tRNA pseudouridine synthase D (Pseudomonas syringae pv. tomato (strain ATCC BAA-871 / DC3000)).